A 160-amino-acid chain; its full sequence is MAKSKNHTTHNQSRKWHRNGIKKPRSQRYESLKGVDPKFLRNMRFAKKHNKKGLKKMQANNAKAMSARAEAIKALVKPKEVKPNIPKGGSRKLSRLAYIAHPKLGKRARARIAKGLRFCRPKSQAKAQSKAKATAGGTAAAPVPPASAPKGAQAPTKAPQ.

Positions Met-1–Ser-26 are enriched in basic residues. The segment at Met-1 to Leu-32 is disordered. Lys-5 is modified (N6-methyllysine). Ser-31 is subject to Phosphoserine. An N6-acetyllysine modification is found at Lys-33. The interval Cys-119–Gln-160 is disordered. A compositionally biased stretch (low complexity) spans Pro-121–Ala-141.

Belongs to the eukaryotic ribosomal protein eL29 family. In terms of assembly, component of the large ribosomal subunit.

The protein resides in the cytoplasm. Its function is as follows. Component of the large ribosomal subunit. The ribosome is a large ribonucleoprotein complex responsible for the synthesis of proteins in the cell. The chain is Large ribosomal subunit protein eL29 (RPL29) from Sus scrofa (Pig).